The sequence spans 74 residues: Mucroporin (74 aa).

Residues 1–22 form the signal peptide; sequence MKVKFLLAVFLIVLVVTDHCHA. Position 39 is a lysine amide (Lys39). A propeptide spanning residues 45 to 74 is cleaved from the precursor; sequence QMEARFEPQNRNYRKRELDLEKLFANMPDY.

Belongs to the non-disulfide-bridged peptide (NDBP) superfamily. Short antimicrobial peptide (group 4) family. As to expression, expressed by the venom gland.

It is found in the secreted. It localises to the target cell membrane. In terms of biological role, mucroporin: cationic host defense peptide that have antibacterial activity by breaking membranes. Is more effective on Gram-positive than on Gram-negative bacteria. Minimum inhibitory concentrations (MIC) are the following: MIC=&gt;100 ug/ml against E.coli AB94012, MIC=&gt;100 ug/ml against P.aeruginosa AB93066, MIC=25 ug/ml against B.thuringiensis AB92037, MIC=50 ug/ml against B.subtilis AB91021, MIC=25 ug/ml against S.aureus AB94004, and MIC=25 ug/ml against the methicillin-resistant coagulase-negative Staphylococcus. Its synthetic analog mucroporin-M1 is more effective. Does not show antiviral activity against any of measles, SARS-CoV, influenza H5N1, hepatitis B and HIV-1 viruses. Functionally, mutant mucroporin-M1: can inhibit Gram-positive bacteria at low concentrations and antibiotic-resistant pathogens. Minimum inhibitory concentrations (MIC) are the following: MIC=12.5 ug/ml against E.coli AB94012, MIC=100 ug/ml against P.aeruginosa AB93066, MIC=25 ug/ml against B.thuringiensis AB92037, MIC=25 ug/ml against B.subtilis AB91021, MIC=5 ug/ml against S.aureus AB94004, and MIC=5 ug/ml against the methicillin-resistant coagulase-negative Staphylococcus. Also shows antiviral activities against measles (EC(50) of 7.15 ug/ml), SARS-CoV (EC(50) of 14.46 ug/ml), influenza H5N1 viruses (EC(50) of 2.10 mug/ml), HIV-1, and hepatitis B virus. In Lychas mucronatus (Chinese swimming scorpion), this protein is Mucroporin.